A 225-amino-acid chain; its full sequence is MAIKDWPQGEGPREKLLRSGVAQLSDAELLAVLLRNGLKGQSAVSLARVMLTHFGGLRALFSASLSELCDIQGIGPVKYAQLQAAIELSKRIAQENLQRGKILSDPDLTRDYLMRQLADRAYEVFAILLLDSQHRVIQFVELFRGTIDSASVYPREVVSLVLEKKAAAVIVCHNHPSGGAEPSHADRRITERLKYALATIDVSLLDHMVVGDREIVSFAERGWID.

An MPN domain is found at 102 to 224 (ILSDPDLTRD…IVSFAERGWI (123 aa)). Zn(2+)-binding residues include histidine 173, histidine 175, and aspartate 186. Residues 173–186 (HNHPSGGAEPSHAD) carry the JAMM motif motif.

Belongs to the UPF0758 family.

The polypeptide is UPF0758 protein Shew_3481 (Shewanella loihica (strain ATCC BAA-1088 / PV-4)).